The chain runs to 111 residues: Aquaporin-2 (111 aa).

At 1-6 (SIAFSR) the chain is on the cytoplasmic side. Residues 7-27 (AVFSEFLATLLFVFFGLGSAL) traverse the membrane as a helical segment. Over 28 to 37 (NWPSTVPIPT) the chain is Extracellular. The chain crosses the membrane as a helical span at residues 38 to 56 (VLQISMAFGLAIGTLVQTL). Over 57-61 (GHISG) the chain is Cytoplasmic. Positions 62 to 71 (AHINPAVTVA) form an intramembrane region, discontinuously helical. Residues 65 to 67 (NPA) carry the NPA 1 motif. The Cytoplasmic portion of the chain corresponds to 72–82 (CLVGCHVSFLR). A helical membrane pass occupies residues 83–104 (ATFYVAAQLLGAVAGAALLHKL). Residues 105-111 (TPEDIRG) lie on the Extracellular side of the membrane.

This sequence belongs to the MIP/aquaporin (TC 1.A.8) family. As to quaternary structure, homotetramer. Post-translationally, serine phosphorylation is necessary and sufficient for expression at the apical membrane. Endocytosis is not phosphorylation-dependent. N-glycosylated.

The protein localises to the apical cell membrane. Its subcellular location is the basolateral cell membrane. It localises to the cell membrane. The protein resides in the cytoplasmic vesicle membrane. It is found in the golgi apparatus. The protein localises to the trans-Golgi network membrane. It catalyses the reaction H2O(in) = H2O(out). The catalysed reaction is glycerol(in) = glycerol(out). Its function is as follows. Forms a water-specific channel that provides the plasma membranes of renal collecting duct with high permeability to water, thereby permitting water to move in the direction of an osmotic gradient. Plays an essential role in renal water homeostasis. Could also be permeable to glycerol. This chain is Aquaporin-2, found in Macroscelides proboscideus (Short-eared elephant shrew).